Reading from the N-terminus, the 791-residue chain is Penicillin-binding protein 1A (791 aa).

The Cytoplasmic segment spans residues Met1–Phe6. A helical; Signal-anchor for type II membrane protein membrane pass occupies residues Phe7–Ile27. Residues Tyr28–Tyr791 are Periplasmic-facing. Residues Thr49–Ala220 form a transglycosylase region. The active-site Proton donor; for transglycosylase activity is the Glu87. Residues Asp398–Asp711 are transpeptidase. The Acyl-ester intermediate; for transpeptidase activity role is filled by Ser457.

The protein in the N-terminal section; belongs to the glycosyltransferase 51 family. It in the C-terminal section; belongs to the transpeptidase family.

Its subcellular location is the cell inner membrane. The enzyme catalyses [GlcNAc-(1-&gt;4)-Mur2Ac(oyl-L-Ala-gamma-D-Glu-L-Lys-D-Ala-D-Ala)](n)-di-trans,octa-cis-undecaprenyl diphosphate + beta-D-GlcNAc-(1-&gt;4)-Mur2Ac(oyl-L-Ala-gamma-D-Glu-L-Lys-D-Ala-D-Ala)-di-trans,octa-cis-undecaprenyl diphosphate = [GlcNAc-(1-&gt;4)-Mur2Ac(oyl-L-Ala-gamma-D-Glu-L-Lys-D-Ala-D-Ala)](n+1)-di-trans,octa-cis-undecaprenyl diphosphate + di-trans,octa-cis-undecaprenyl diphosphate + H(+). It carries out the reaction Preferential cleavage: (Ac)2-L-Lys-D-Ala-|-D-Ala. Also transpeptidation of peptidyl-alanyl moieties that are N-acyl substituents of D-alanine.. It participates in cell wall biogenesis; peptidoglycan biosynthesis. Functionally, cell wall formation. Synthesis of cross-linked peptidoglycan from the lipid intermediates. The enzyme has a penicillin-insensitive transglycosylase N-terminal domain (formation of linear glycan strands) and a penicillin-sensitive transpeptidase C-terminal domain (cross-linking of the peptide subunits). The protein is Penicillin-binding protein 1A (mrcA) of Rickettsia bellii (strain RML369-C).